A 207-amino-acid chain; its full sequence is Protein LURP1 (207 aa).

This sequence belongs to the LOR family. Limited to discrete pathogen infection sites in leaves.

Its function is as follows. Involved in basal defense against virulent oomycetes. Might be related to the phospholipid scramblase and tubby-like superfamily of membrane tethered transcription factors. This is Protein LURP1 (LURP1) from Arabidopsis thaliana (Mouse-ear cress).